A 359-amino-acid chain; its full sequence is MTNLPSHHTAIVGSEDGSLKVAEQVPLPRLENDMILVRNTAVALNPIDGKMVGNLASVGAVAGMDYVGTVVGIGPKVKTASEIQLGDRVCGAVQGMHSLTPSVGAFAQFVGATDIVTLKVPPSMTVEDAATLGSGVGTIGLALFRSLDVPGYPEAPATERIPVLVYGGSTATGTLAIQLLKLSGLIPITTCSPHNFDLVKSFGAEAVFDYRRPETPDEIRKFTRNSLKYVLDCISEPETMQFCYKCIGRTGGKYTALEPFPQFLHTRPTIQPDWVLGPTLLGKPIGWGPPFERVGDPDVREFAIKWFATAQRLLDQGKLQTHPVKLMEGGFEGILCGLEMLKKKQVSGQKLVYMIPQVA.

47 to 50 contributes to the NADP(+) binding site; the sequence is IDGK. Substrate is bound at residue 134–141; that stretch reads SGVGTIGL. NADP(+) contacts are provided by residues 169–172, 192–195, tyrosine 210, and 257–258; these read STAT, SPHN, and LE. 277–281 serves as a coordination point for substrate; sequence GPTLL. 346-347 serves as a coordination point for NADP(+); sequence VS.

This sequence belongs to the zinc-containing alcohol dehydrogenase family. As to quaternary structure, monomer.

It functions in the pathway secondary metabolite biosynthesis. Trans-enoyl reductase; part of the gene cluster that mediates the biosynthesis of fusarielins F, G and H, decaketide compounds with 5 methylations and a decaline core that act as mycoestrogens as they stimulate growth of MCF-7 breast cancer cells. The initial compound in the pathway is produced by the reducing polyketide synthase FSL1. FSL1 lacks an active enoyl reductase (ER) domain and biosynthesis of fusarielins relies on the trans-acting enoyl reductase FSL5, before it is released through hydrolysis catalyzed by the thioesterase FSL2. Fusarielins F, G, and H have a C11=C12 cis double bond and is fully reduced between C10 and C11 and between C12 and C13. FSL3 can be involved in the formation of the C11=C12 cis double bond by moving a hypothetical C10=C11 or C12=C13 trans double bond to form prefusarielin. Prefusarielin is oxygenated at C15 and C16 by the cytochrome P450 monooxygenase FSL4, resulting in fusarielin F, which subsequently is epoxidized into fusarielin G by the same enzyme. The final step in the pathway is a reduction of the carboxylic acid moiety to yield fusarielin H via a still undetermined mechanism. The protein is Trans-enoyl reductase FSL5 of Gibberella zeae (strain ATCC MYA-4620 / CBS 123657 / FGSC 9075 / NRRL 31084 / PH-1) (Wheat head blight fungus).